Consider the following 163-residue polypeptide: D-aminoacyl-tRNA deacylase (163 aa).

The Gly-cisPro motif, important for rejection of L-amino acids signature appears at 141-142; the sequence is GP.

It belongs to the DTD family. As to quaternary structure, homodimer.

It localises to the cytoplasm. It catalyses the reaction glycyl-tRNA(Ala) + H2O = tRNA(Ala) + glycine + H(+). The enzyme catalyses a D-aminoacyl-tRNA + H2O = a tRNA + a D-alpha-amino acid + H(+). An aminoacyl-tRNA editing enzyme that deacylates mischarged D-aminoacyl-tRNAs. Also deacylates mischarged glycyl-tRNA(Ala), protecting cells against glycine mischarging by AlaRS. Acts via tRNA-based rather than protein-based catalysis; rejects L-amino acids rather than detecting D-amino acids in the active site. By recycling D-aminoacyl-tRNA to D-amino acids and free tRNA molecules, this enzyme counteracts the toxicity associated with the formation of D-aminoacyl-tRNA entities in vivo and helps enforce protein L-homochirality. The sequence is that of D-aminoacyl-tRNA deacylase from Neisseria meningitidis serogroup A / serotype 4A (strain DSM 15465 / Z2491).